Reading from the N-terminus, the 79-residue chain is Dolichyl-diphosphooligosaccharide--protein glycosyltransferase subunit TMEM258 (79 aa).

Met1 bears the N-acetylmethionine mark. Over 1-16 (MELEAMSRYTSPVNPA) the chain is Lumenal. The chain crosses the membrane as a helical span at residues 17 to 37 (VFPHLTVVLLAIGMFFTAWFF). Residues 38–54 (VYEVTSTKYTRDICKEL) lie on the Cytoplasmic side of the membrane. A helical membrane pass occupies residues 55–75 (LISLVASLFMGFGVLFLLLWV). Topologically, residues 76–79 (GIYV) are lumenal.

It belongs to the OST5 family. Component of the oligosaccharyltransferase (OST) complex. OST exists in two different complex forms which contain common core subunits RPN1, RPN2, OST48, OST4, DAD1 and TMEM258, either STT3A or STT3B as catalytic subunits, and form-specific accessory subunits. STT3A complex assembly occurs through the formation of 3 subcomplexes. Subcomplex 1 contains RPN1 and TMEM258, subcomplex 2 contains the STT3A-specific subunits STT3A, DC2/OSTC, and KCP2 as well as the core subunit OST4, and subcomplex 3 contains RPN2, DAD1, and OST48. The STT3A complex can form stable complexes with the Sec61 complex or with both the Sec61 and TRAP complexes.

The protein resides in the membrane. Its subcellular location is the endoplasmic reticulum. It localises to the cytoplasm. The protein operates within protein modification; protein glycosylation. Subunit of the oligosaccharyl transferase (OST) complex that catalyzes the initial transfer of a defined glycan (Glc(3)Man(9)GlcNAc(2) in eukaryotes) from the lipid carrier dolichol-pyrophosphate to an asparagine residue within an Asn-X-Ser/Thr consensus motif in nascent polypeptide chains, the first step in protein N-glycosylation. N-glycosylation occurs cotranslationally and the complex associates with the Sec61 complex at the channel-forming translocon complex that mediates protein translocation across the endoplasmic reticulum (ER). All subunits are required for a maximal enzyme activity. The protein is Dolichyl-diphosphooligosaccharide--protein glycosyltransferase subunit TMEM258 of Canis lupus familiaris (Dog).